Here is a 1295-residue protein sequence, read N- to C-terminus: DNA (cytosine-5)-methyltransferase CMT2 (1295 aa).

Disordered stretches follow at residues M1–R23, R61–Q91, and N249–M287. Over residues R61–E72 the composition is skewed to polar residues. In terms of domain architecture, BAH spans H578–R693. The 542-residue stretch at L727–L1268 folds into the SAM-dependent MTase C5-type domain. A disordered region spans residues S814–E835. Residues Y837 to L902 enclose the Chromo domain. C915 is an active-site residue.

It belongs to the class I-like SAM-binding methyltransferase superfamily. C5-methyltransferase family.

Its subcellular location is the nucleus. The catalysed reaction is a 2'-deoxycytidine in DNA + S-adenosyl-L-methionine = a 5-methyl-2'-deoxycytidine in DNA + S-adenosyl-L-homocysteine + H(+). In terms of biological role, may be involved in the CpXpG methylation and in gene silencing. The polypeptide is DNA (cytosine-5)-methyltransferase CMT2 (CMT2) (Arabidopsis thaliana (Mouse-ear cress)).